The following is a 522-amino-acid chain: Cytochrome b mRNA maturase bI3 (522 aa).

Topologically, residues 1 to 31 (MTIRKSNPYLSLVNSYLMDSPQPSSMNYWWN) are mitochondrial matrix. A cytochrome b region spans residues 1–163 (MTIRKSNPYL…MPFMGGDLVP (163 aa)). A helical transmembrane segment spans residues 32-52 (VGSLLGLCLVMQMASGMFLAM). Over 53 to 84 (HYSSSMELAFNSVEHMMRDVNAGWLMRYIHAN) the chain is Mitochondrial intermembrane. Residues 85–105 (GASFFFMCLYLHMGKALYYGS) traverse the membrane as a helical segment. The Mitochondrial matrix segment spans residues 106-110 (YKSPR). Residues 111 to 131 (VLVWSMGVMMFMLTMATAFMG) traverse the membrane as a helical segment. The Mitochondrial intermembrane segment spans residues 132–154 (YCLVYGQMSHWGATVITNLLSAM). The helical transmembrane segment at 155 to 175 (PFMGGDLVPLSIILSLYLLYI) threads the bilayer. A maturase region spans residues 164 to 522 (LSIILSLYLL…PYMSWHQKEQ (359 aa)). Topologically, residues 176–522 (SLKTFMKMIF…PYMSWHQKEQ (347 aa)) are mitochondrial matrix.

The protein in the N-terminal section; belongs to the cytochrome b family. In the C-terminal section; belongs to the LAGLIDADG endonuclease family.

Its subcellular location is the mitochondrion inner membrane. Functionally, mitochondrial mRNA maturase required for splicing of intron 3 of the cytochrome b (COB) gene, containing its own coding sequence. The sequence is that of Cytochrome b mRNA maturase bI3 (bI3) from Debaryomyces hansenii (strain ATCC 36239 / CBS 767 / BCRC 21394 / JCM 1990 / NBRC 0083 / IGC 2968) (Yeast).